The sequence spans 545 residues: CTP synthase (545 aa).

The amidoligase domain stretch occupies residues 1–266 (MTTRYIFVTG…DELVVKRFGI (266 aa)). Serine 14 is a binding site for CTP. A UTP-binding site is contributed by serine 14. ATP-binding positions include 15-20 (SLGKGI) and aspartate 72. Mg(2+) is bound by residues aspartate 72 and glutamate 140. CTP is bound by residues 147–149 (DIE), 187–192 (KTKPTQ), and lysine 223. UTP-binding positions include 187 to 192 (KTKPTQ) and lysine 223. 239–241 (KDV) is a binding site for ATP. Residues 291 to 542 (TIGMVGKYIE…VAAATAYQKR (252 aa)) form the Glutamine amidotransferase type-1 domain. Glycine 352 contacts L-glutamine. Cysteine 379 serves as the catalytic Nucleophile; for glutamine hydrolysis. L-glutamine is bound by residues 380-383 (LGLQ), glutamate 403, and arginine 470. Catalysis depends on residues histidine 515 and glutamate 517.

Belongs to the CTP synthase family. Homotetramer.

The enzyme catalyses UTP + L-glutamine + ATP + H2O = CTP + L-glutamate + ADP + phosphate + 2 H(+). It carries out the reaction L-glutamine + H2O = L-glutamate + NH4(+). It catalyses the reaction UTP + NH4(+) + ATP = CTP + ADP + phosphate + 2 H(+). Its pathway is pyrimidine metabolism; CTP biosynthesis via de novo pathway; CTP from UDP: step 2/2. Allosterically activated by GTP, when glutamine is the substrate; GTP has no effect on the reaction when ammonia is the substrate. The allosteric effector GTP functions by stabilizing the protein conformation that binds the tetrahedral intermediate(s) formed during glutamine hydrolysis. Inhibited by the product CTP, via allosteric rather than competitive inhibition. In terms of biological role, catalyzes the ATP-dependent amination of UTP to CTP with either L-glutamine or ammonia as the source of nitrogen. Regulates intracellular CTP levels through interactions with the four ribonucleotide triphosphates. In Shewanella sediminis (strain HAW-EB3), this protein is CTP synthase.